Reading from the N-terminus, the 226-residue chain is Transcriptional regulatory protein DpiA (226 aa).

Residues 6–122 form the Response regulatory domain; it reads TLLIVEDETP…RLGQTLTRFR (117 aa). Residue Asp-57 is modified to 4-aspartylphosphate. The H-T-H motif DNA-binding region spans 180–199; that stretch reads AETVAQALTISRTTARRYLE.

In terms of processing, phosphorylated and activated by DpiB.

It is found in the cytoplasm. In terms of biological role, member of the two-component regulatory system DpiA/DpiB, which is essential for expression of citrate-specific fermentation genes and genes involved in plasmid inheritance. Could be involved in response to both the presence of citrate and external redox conditions. This chain is Transcriptional regulatory protein DpiA (dpiA), found in Escherichia coli O157:H7.